The following is a 43-amino-acid chain: Cytochrome b559 subunit beta (43 aa).

A helical membrane pass occupies residues 18–34 (WLAVHGLAIPTVFFLGG). Histidine 22 provides a ligand contact to heme.

Belongs to the PsbE/PsbF family. Heterodimer of an alpha subunit and a beta subunit. PSII is composed of 1 copy each of membrane proteins PsbA, PsbB, PsbC, PsbD, PsbE, PsbF, PsbH, PsbI, PsbJ, PsbK, PsbL, PsbM, PsbT, PsbX, PsbY, PsbZ, Psb30/Ycf12, at least 3 peripheral proteins of the oxygen-evolving complex and a large number of cofactors. It forms dimeric complexes. Heme b serves as cofactor.

It localises to the plastid. The protein localises to the chloroplast thylakoid membrane. Its function is as follows. This b-type cytochrome is tightly associated with the reaction center of photosystem II (PSII). PSII is a light-driven water:plastoquinone oxidoreductase that uses light energy to abstract electrons from H(2)O, generating O(2) and a proton gradient subsequently used for ATP formation. It consists of a core antenna complex that captures photons, and an electron transfer chain that converts photonic excitation into a charge separation. In Thalassiosira pseudonana (Marine diatom), this protein is Cytochrome b559 subunit beta.